A 554-amino-acid polypeptide reads, in one-letter code: Glucose-6-phosphate isomerase (554 aa).

The active-site Proton donor is the Glu359. Catalysis depends on residues His390 and Lys518.

The protein belongs to the GPI family.

The protein resides in the cytoplasm. It carries out the reaction alpha-D-glucose 6-phosphate = beta-D-fructose 6-phosphate. It participates in carbohydrate biosynthesis; gluconeogenesis. Its pathway is carbohydrate degradation; glycolysis; D-glyceraldehyde 3-phosphate and glycerone phosphate from D-glucose: step 2/4. Catalyzes the reversible isomerization of glucose-6-phosphate to fructose-6-phosphate. The chain is Glucose-6-phosphate isomerase from Pseudomonas putida (strain W619).